Reading from the N-terminus, the 488-residue chain is Proline--tRNA ligase (488 aa).

Belongs to the class-II aminoacyl-tRNA synthetase family. ProS type 3 subfamily. In terms of assembly, homodimer.

Its subcellular location is the cytoplasm. The catalysed reaction is tRNA(Pro) + L-proline + ATP = L-prolyl-tRNA(Pro) + AMP + diphosphate. Functionally, catalyzes the attachment of proline to tRNA(Pro) in a two-step reaction: proline is first activated by ATP to form Pro-AMP and then transferred to the acceptor end of tRNA(Pro). The protein is Proline--tRNA ligase of Pyrobaculum islandicum (strain DSM 4184 / JCM 9189 / GEO3).